A 513-amino-acid polypeptide reads, in one-letter code: cAMP-regulated M3R protein (513 aa).

This sequence to D.discoideum protein M3L.

The chain is cAMP-regulated M3R protein (prtB) from Dictyostelium discoideum (Social amoeba).